We begin with the raw amino-acid sequence, 451 residues long: Tubulin alpha-1 chain (451 aa).

Residue Q11 participates in GTP binding. K40 bears the N6-acetyllysine mark. The GTP site is built by E71, G144, T145, T179, N206, and N228. E71 contributes to the Mg(2+) binding site. Residue E254 is part of the active site.

This sequence belongs to the tubulin family. As to quaternary structure, dimer of alpha and beta chains. A typical microtubule is a hollow water-filled tube with an outer diameter of 25 nm and an inner diameter of 15 nM. Alpha-beta heterodimers associate head-to-tail to form protofilaments running lengthwise along the microtubule wall with the beta-tubulin subunit facing the microtubule plus end conferring a structural polarity. Microtubules usually have 13 protofilaments but different protofilament numbers can be found in some organisms and specialized cells. Requires Mg(2+) as cofactor. In terms of processing, undergoes a tyrosination/detyrosination cycle, the cyclic removal and re-addition of a C-terminal tyrosine residue by the enzymes tubulin tyrosine carboxypeptidase (TTCP) and tubulin tyrosine ligase (TTL), respectively. Post-translationally, acetylation of alpha chains at Lys-40 stabilizes microtubules and affects affinity and processivity of microtubule motors. This modification has a role in multiple cellular functions, ranging from cell motility, cell cycle progression or cell differentiation to intracellular trafficking and signaling.

It is found in the cytoplasm. The protein resides in the cytoskeleton. It carries out the reaction GTP + H2O = GDP + phosphate + H(+). Tubulin is the major constituent of microtubules, a cylinder consisting of laterally associated linear protofilaments composed of alpha- and beta-tubulin heterodimers. Microtubules grow by the addition of GTP-tubulin dimers to the microtubule end, where a stabilizing cap forms. Below the cap, tubulin dimers are in GDP-bound state, owing to GTPase activity of alpha-tubulin. This is Tubulin alpha-1 chain (TUBA1) from Zea mays (Maize).